A 605-amino-acid chain; its full sequence is Ankyrin repeat domain-containing protein 13D (605 aa).

UIM domains are found at residues 482-501 (EDDD…AGTE) and 528-547 (EEQL…STES). The span at 538–554 (QESLQLSTESRGPESPQ) shows a compositional bias: low complexity. The disordered stretch occupies residues 538 to 605 (QESLQLSTES…RILQLSLTEH (68 aa)). The residue at position 552 (S552) is a Phosphoserine. T556 is modified (phosphothreonine). Over residues 564–575 (SFEEQLRLALEL) the composition is skewed to low complexity. 2 consecutive UIM domains span residues 564–583 (SFEE…QEEL) and 589–605 (QEED…LTEH). Over residues 576-589 (SSREQEELERRGQQ) the composition is skewed to basic and acidic residues.

In terms of assembly, interacts with EGFR (ubiquitinated); the interaction is direct and may regulate EGFR internalization.

Its subcellular location is the cell membrane. It is found in the late endosome. In terms of biological role, ubiquitin-binding protein that specifically recognizes and binds 'Lys-63'-linked ubiquitin. Does not bind 'Lys-48'-linked ubiquitin. Positively regulates the internalization of ligand-activated EGFR by binding to the Ub moiety of ubiquitinated EGFR at the cell membrane. In Mus musculus (Mouse), this protein is Ankyrin repeat domain-containing protein 13D (Ankrd13d).